A 225-amino-acid polypeptide reads, in one-letter code: Thymidylate kinase (225 aa).

An ATP-binding site is contributed by 9–16; the sequence is GIEGCGKT.

It belongs to the thymidylate kinase family.

It carries out the reaction dTMP + ATP = dTDP + ADP. Its function is as follows. Phosphorylation of dTMP to form dTDP in both de novo and salvage pathways of dTTP synthesis. This is Thymidylate kinase from Geobacter sp. (strain M21).